The following is a 484-amino-acid chain: UDP-N-acetylmuramoyl-L-alanyl-D-glutamate--L-lysine ligase (484 aa).

S43 lines the UDP-N-acetyl-alpha-D-muramoyl-L-alanyl-D-glutamate pocket. 119–125 (GTKGKTT) provides a ligand contact to ATP. UDP-N-acetyl-alpha-D-muramoyl-L-alanyl-D-glutamate is bound by residues 161-162 (TT), S188, and R196. K230 carries the N6-carboxylysine modification. An L-lysine recognition motif motif is present at residues 405 to 408 (DDPN).

The protein belongs to the MurCDEF family. MurE subfamily. Post-translationally, carboxylation is probably crucial for Mg(2+) binding and, consequently, for the gamma-phosphate positioning of ATP.

The protein localises to the cytoplasm. The catalysed reaction is UDP-N-acetyl-alpha-D-muramoyl-L-alanyl-D-glutamate + L-lysine + ATP = UDP-N-acetyl-alpha-D-muramoyl-L-alanyl-gamma-D-glutamyl-L-lysine + ADP + phosphate + H(+). It participates in cell wall biogenesis; peptidoglycan biosynthesis. Functionally, catalyzes the addition of L-lysine to the nucleotide precursor UDP-N-acetylmuramoyl-L-alanyl-D-glutamate (UMAG) in the biosynthesis of bacterial cell-wall peptidoglycan. This is UDP-N-acetylmuramoyl-L-alanyl-D-glutamate--L-lysine ligase from Streptococcus agalactiae serotype V (strain ATCC BAA-611 / 2603 V/R).